Reading from the N-terminus, the 425-residue chain is Serine hydroxymethyltransferase (425 aa).

Residues L120 and 124–126 (GHL) each bind (6S)-5,6,7,8-tetrahydrofolate. K229 carries the post-translational modification N6-(pyridoxal phosphate)lysine. 353-355 (SPF) contacts (6S)-5,6,7,8-tetrahydrofolate.

It belongs to the SHMT family. In terms of assembly, homodimer. Pyridoxal 5'-phosphate serves as cofactor.

It is found in the cytoplasm. The catalysed reaction is (6R)-5,10-methylene-5,6,7,8-tetrahydrofolate + glycine + H2O = (6S)-5,6,7,8-tetrahydrofolate + L-serine. Its pathway is one-carbon metabolism; tetrahydrofolate interconversion. It participates in amino-acid biosynthesis; glycine biosynthesis; glycine from L-serine: step 1/1. Functionally, catalyzes the reversible interconversion of serine and glycine with tetrahydrofolate (THF) serving as the one-carbon carrier. This reaction serves as the major source of one-carbon groups required for the biosynthesis of purines, thymidylate, methionine, and other important biomolecules. Also exhibits THF-independent aldolase activity toward beta-hydroxyamino acids, producing glycine and aldehydes, via a retro-aldol mechanism. This Thermosynechococcus vestitus (strain NIES-2133 / IAM M-273 / BP-1) protein is Serine hydroxymethyltransferase.